The sequence spans 397 residues: Subtilisin-like protease 3 (397 aa).

Residues methionine 1–alanine 19 form the signal peptide. Positions arginine 20–alanine 116 are excised as a propeptide. In terms of domain architecture, Inhibitor I9 spans serine 35–alanine 116. Residues threonine 126–glutamine 397 form the Peptidase S8 domain. Catalysis depends on charge relay system residues aspartate 158 and histidine 189. Asparagine 250 carries N-linked (GlcNAc...) asparagine glycosylation. Serine 344 serves as the catalytic Charge relay system. Residue asparagine 393 is glycosylated (N-linked (GlcNAc...) asparagine).

It belongs to the peptidase S8 family.

The protein resides in the secreted. Secreted subtilisin-like serine protease with keratinolytic activity that contributes to pathogenicity. This chain is Subtilisin-like protease 3 (SUB3), found in Trichophyton equinum (Horse ringworm fungus).